A 663-amino-acid polypeptide reads, in one-letter code: UvrABC system protein B (663 aa).

Over residues 1–10 the composition is skewed to basic and acidic residues; the sequence is MIDKRDDKPF. Residues 1 to 23 form a disordered region; sequence MIDKRDDKPFKLKSKYKPSGDQP. The Helicase ATP-binding domain occupies 31-418; sequence DNIEGGEKAQ…TNTIIEQIIR (388 aa). An ATP-binding site is contributed by 44-51; that stretch reads GATGTGKT. Positions 97–120 match the Beta-hairpin motif; the sequence is YYDYYQPEAYVPSSDTYIEKDSSV. The region spanning 435-601 is the Helicase C-terminal domain; it reads QMDDLLGEIN…TIKKDIRGLI (167 aa). Residues 627–662 enclose the UVR domain; the sequence is KEAINALQKQMQEAAELLDFELAAQMRDLILELKLM.

This sequence belongs to the UvrB family. Forms a heterotetramer with UvrA during the search for lesions. Interacts with UvrC in an incision complex.

It localises to the cytoplasm. In terms of biological role, the UvrABC repair system catalyzes the recognition and processing of DNA lesions. A damage recognition complex composed of 2 UvrA and 2 UvrB subunits scans DNA for abnormalities. Upon binding of the UvrA(2)B(2) complex to a putative damaged site, the DNA wraps around one UvrB monomer. DNA wrap is dependent on ATP binding by UvrB and probably causes local melting of the DNA helix, facilitating insertion of UvrB beta-hairpin between the DNA strands. Then UvrB probes one DNA strand for the presence of a lesion. If a lesion is found the UvrA subunits dissociate and the UvrB-DNA preincision complex is formed. This complex is subsequently bound by UvrC and the second UvrB is released. If no lesion is found, the DNA wraps around the other UvrB subunit that will check the other stand for damage. This is UvrABC system protein B from Streptococcus pyogenes serotype M3 (strain ATCC BAA-595 / MGAS315).